Reading from the N-terminus, the 1921-residue chain is Disks large homolog 5 (1921 aa).

The region spanning 1–90 is the CARD domain; that stretch reads MEPQRRELLA…HLLPILYLNG (90 aa). A disordered region spans residues 116-143; it reads ESSSSLSSVGTTGKAPSPPPLLTEQQAN. The stretch at 139-601 forms a coiled coil; sequence EQQANDTVEN…KEARFRQLMA (463 aa). S264 and S295 each carry phosphoserine. 2 consecutive PDZ domains span residues 620–710 and 705–796; these read VVEF…RRRK and VVRR…LKVF. A disordered region spans residues 857–898; that stretch reads ELGHSGGSSSFLHKPFSGSSSPVSPQACPSTSERSLNSFRSD. The span at 873-898 shows a compositional bias: polar residues; sequence SGSSSPVSPQACPSTSERSLNSFRSD. The residue at position 900 (S900) is a Phosphoserine. The disordered stretch occupies residues 930-1121; sequence EVPLDKIDPE…RPKSAPSFRP (192 aa). Phosphothreonine is present on T984. A Phosphoserine modification is found at S1000. Phosphothreonine is present on T1011. Residues 1017 to 1030 are compositionally biased toward basic and acidic residues; that stretch reads RRSDSIKFQHRLET. Phosphoserine is present on S1021. The span at 1045–1055 shows a compositional bias: pro residues; sequence TSPPSAPPPSM. Phosphothreonine is present on T1183. 3 disordered regions span residues 1204–1227, 1243–1266, and 1280–1343; these read VLPCGSPPVPRDAGSQSLSPSVQH, YSEMRASQGSNSLPSSARLGSSSN, and PRYP…KDRP. S1209 is modified (phosphoserine). A compositionally biased stretch (polar residues) spans 1217 to 1227; it reads GSQSLSPSVQH. Over residues 1252–1266 the composition is skewed to low complexity; sequence SNSLPSSARLGSSSN. S1263 is modified (phosphoserine). Polar residues predominate over residues 1292-1324; the sequence is GSLSHSECSTPPRSPLNIDTLSSCSQPQTTAST. The residue at position 1334 (S1334) is a Phosphoserine. The 80-residue stretch at 1350–1429 folds into the PDZ 3 domain; it reads HVKVQKGSEP…TITILAQYNP (80 aa). Composition is skewed to polar residues over residues 1434 to 1443, 1450 to 1460, and 1483 to 1495; these read LNSHSRSSSH, PHSTLQGSSAG, and AKQSASSTRSVGD. Positions 1434 to 1501 are disordered; sequence LNSHSRSSSH…SVGDTTKKTP (68 aa). In terms of domain architecture, PDZ 4 spans 1504 to 1585; sequence RIVFIKKSQL…SLRLKVQYRH (82 aa). Residues 1596–1664 enclose the SH3 domain; it reads GDSFYIRALY…PSKYVMDQEF (69 aa). S1669 carries the post-translational modification Phosphoserine. One can recognise a Guanylate kinase-like domain in the interval 1724–1907; it reads DSVSLAYQRV…ICTQILAMVS (184 aa).

It belongs to the MAGUK family. In terms of assembly, interacts with MPP1. Interacts with CTNNB1 and with the third SH3 domain of SORBS3 to form a ternary complex. Interacts (via coiled-coil domain) with MARK3. Interacts (via PDZ domain 3) with STK3/MST2 and STK4/MST1. Interacts with SCRIB. Interacts with CTNB1. Interacts with SMO and (via PDZ4 or guanylate kinase-like domain) with KIF7. In terms of tissue distribution, brain (at protein level).

Its subcellular location is the cell junction. It is found in the cell membrane. The protein resides in the postsynaptic density. The protein localises to the cytoplasm. It localises to the cytoskeleton. Its subcellular location is the cilium basal body. Functionally, acts as a regulator of the Hippo signaling pathway. Negatively regulates the Hippo signaling pathway by mediating the interaction of MARK3 with STK3/4, bringing them together to promote MARK3-dependent hyperphosphorylation and inactivation of STK3 kinase activity toward LATS1. Positively regulates the Hippo signaling by mediating the interaction of SCRIB with STK4/MST1 and LATS1 which is important for the activation of the Hippo signaling pathway. Involved in regulating cell proliferation, maintenance of epithelial polarity, epithelial-mesenchymal transition (EMT), cell migration and invasion. Plays an important role in dendritic spine formation and synaptogenesis in cortical neurons; regulates synaptogenesis by enhancing the cell surface localization of N-cadherin. Acts as a positive regulator of hedgehog (Hh) signaling pathway. Plays a critical role in the early point of the SMO activity cycle by interacting with SMO at the ciliary base to induce the accumulation of KIF7 and GLI2 at the ciliary tip for GLI2 activation. This Mus musculus (Mouse) protein is Disks large homolog 5 (Dlg5).